Here is a 513-residue protein sequence, read N- to C-terminus: Ferulic acid decarboxylase 1 (513 aa).

The Mn(2+) site is built by N174, H197, and E240. Prenylated FMN-binding positions include 174–179 (NWSIAR), 196–197 (QH), and E240. The Proton donor role is filled by E289. K405 lines the prenylated FMN pocket.

This sequence belongs to the UbiD family. UbiD-like/FDC subfamily. As to quaternary structure, homodimer. May form higher order oligomers. The cofactor is Mn(2+). Prenylated FMN serves as cofactor.

It localises to the cytoplasm. The enzyme catalyses (E)-4-coumarate + H(+) = 4-vinylphenol + CO2. The catalysed reaction is (E)-cinnamate + H(+) = styrene + CO2. It catalyses the reaction (E)-ferulate + H(+) = 2-methoxy-4-vinylphenol + CO2. Catalyzes the reversible decarboxylation of aromatic carboxylic acids like ferulic acid, p-coumaric acid or cinnamic acid, producing the corresponding vinyl derivatives 4-vinylphenol, 4-vinylguaiacol, and styrene, respectively, which play the role of aroma metabolites. In Candida dubliniensis (strain CD36 / ATCC MYA-646 / CBS 7987 / NCPF 3949 / NRRL Y-17841) (Yeast), this protein is Ferulic acid decarboxylase 1.